A 117-amino-acid polypeptide reads, in one-letter code: UPF0342 protein OB1136 (117 aa).

This sequence belongs to the UPF0342 family.

This chain is UPF0342 protein OB1136, found in Oceanobacillus iheyensis (strain DSM 14371 / CIP 107618 / JCM 11309 / KCTC 3954 / HTE831).